The chain runs to 122 residues: Large ribosomal subunit protein bL19c (122 aa).

Belongs to the bacterial ribosomal protein bL19 family.

The protein localises to the plastid. It is found in the chloroplast. The sequence is that of Large ribosomal subunit protein bL19c from Gracilaria tenuistipitata var. liui (Red alga).